We begin with the raw amino-acid sequence, 334 residues long: Chitin synthase export chaperone (334 aa).

Helical transmembrane passes span 49 to 69 (IIFE…TVIM), 88 to 108 (FFYL…GVVP), 123 to 143 (GFSS…FQLY), 159 to 179 (LAAF…WAGL), 185 to 205 (VGLF…YVAM), 220 to 240 (LGDI…LYAF), and 250 to 270 (HYLD…MMVY).

This sequence belongs to the CHS7 family. In terms of assembly, interacts with CHS3.

The protein resides in the endoplasmic reticulum membrane. Chaperone required for the export of the chitin synthase CHS3 from the endoplasmic reticulum. This is Chitin synthase export chaperone (CHS7) from Gibberella zeae (strain ATCC MYA-4620 / CBS 123657 / FGSC 9075 / NRRL 31084 / PH-1) (Wheat head blight fungus).